We begin with the raw amino-acid sequence, 500 residues long: Probable glycine dehydrogenase (decarboxylating) subunit 2 (500 aa).

Residues 1 to 25 are disordered; the sequence is MLIFEHSRPGRRNYSQSPKAAEATD. The residue at position 263 (K263) is an N6-(pyridoxal phosphate)lysine.

The protein belongs to the GcvP family. C-terminal subunit subfamily. In terms of assembly, the glycine cleavage system is composed of four proteins: P, T, L and H. In this organism, the P 'protein' is a heterodimer of two subunits. It depends on pyridoxal 5'-phosphate as a cofactor.

It carries out the reaction N(6)-[(R)-lipoyl]-L-lysyl-[glycine-cleavage complex H protein] + glycine + H(+) = N(6)-[(R)-S(8)-aminomethyldihydrolipoyl]-L-lysyl-[glycine-cleavage complex H protein] + CO2. In terms of biological role, the glycine cleavage system catalyzes the degradation of glycine. The P protein binds the alpha-amino group of glycine through its pyridoxal phosphate cofactor; CO(2) is released and the remaining methylamine moiety is then transferred to the lipoamide cofactor of the H protein. The sequence is that of Probable glycine dehydrogenase (decarboxylating) subunit 2 from Nitrosospira multiformis (strain ATCC 25196 / NCIMB 11849 / C 71).